Reading from the N-terminus, the 646-residue chain is Zinc finger protein 493 (646 aa).

The segment at 26-48 (FQCDKYVKVFHKLLNSNRHNTKH) adopts a C2H2-type 1; degenerate zinc-finger fold. C2H2-type zinc fingers lie at residues 54–76 (FKCKKCGKSFCMLLHLCQHKRIH) and 82–104 (YRCEECGKAFIWFSTLTRHRRVH). Residues 109–131 (SYKYECGKSFNQDSNLTTHKRIH) form a C2H2-type 4; degenerate zinc finger. The C2H2-type 5 zinc finger occupies 137 to 159 (YKCEECGTSFYQFSYLTRHKLIH). A C2H2-type 6; degenerate zinc finger spans residues 165–187 (YKCEQYGKTFNQSSTLTGHKIIH). The C2H2-type 7; degenerate zinc-finger motif lies at 193–215 (YKCEECGKAFSIFSTPTKHKIIH). The C2H2-type 8; degenerate zinc-finger motif lies at 221–243 (HRCEEYCKAYKESSHLTTHKRIH). C2H2-type zinc fingers lie at residues 249 to 271 (YKCEECGKAFSIFSTLTKHKIIH), 277 to 299 (HRCEECGKAYKESSHLTTHKRIH), 305 to 327 (YKCEECGKTFSVFSILTKHKIIH), 333 to 355 (YKCEECGKAFKRSSTLTKHRIIH), 361 to 383 (YKCEECGKAFNQSSTLSIHKIIH), 389 to 411 (YKCEECGKAFKRSSTLTIHKMIH), 417 to 439 (YKCEECGKAFNRSSHLTTHKRIH), 445 to 467 (YKCKECGKSFSVFSTLTKHKIIH), 473 to 495 (YKCEECGKAFNRSSILSIHKKIH), 501 to 523 (YKCEECGKAFKRSSHLAGHKQIH), 529 to 551 (YKCEECGKAFSIFSTLTKHKIIH), 557 to 579 (YKCEKCGKTFYRFSNLNTHKIIH), 585 to 607 (CKCEECGKAFNHSSNLIKHKLIH), and 613 to 635 (YKCEACGKAFRRSSHLSRHKIIH).

The protein localises to the nucleus. Its function is as follows. May be involved in transcriptional regulation. The polypeptide is Zinc finger protein 493 (ZNF493) (Homo sapiens (Human)).